A 413-amino-acid polypeptide reads, in one-letter code: Multifunctional CCA protein (413 aa).

ATP contacts are provided by Gly-8 and Arg-11. Residues Gly-8 and Arg-11 each contribute to the CTP site. Residues Asp-21 and Asp-23 each contribute to the Mg(2+) site. ATP is bound by residues Arg-91, Arg-143, and Arg-146. Residues Arg-91, Arg-143, and Arg-146 each coordinate CTP. The region spanning 232-333 (TGVHVMMVVD…VRLFERSDAL (102 aa)) is the HD domain.

The protein belongs to the tRNA nucleotidyltransferase/poly(A) polymerase family. Bacterial CCA-adding enzyme type 1 subfamily. Monomer. Can also form homodimers and oligomers. Mg(2+) is required as a cofactor. The cofactor is Ni(2+).

The enzyme catalyses a tRNA precursor + 2 CTP + ATP = a tRNA with a 3' CCA end + 3 diphosphate. It carries out the reaction a tRNA with a 3' CCA end + 2 CTP + ATP = a tRNA with a 3' CCACCA end + 3 diphosphate. In terms of biological role, catalyzes the addition and repair of the essential 3'-terminal CCA sequence in tRNAs without using a nucleic acid template. Adds these three nucleotides in the order of C, C, and A to the tRNA nucleotide-73, using CTP and ATP as substrates and producing inorganic pyrophosphate. tRNA 3'-terminal CCA addition is required both for tRNA processing and repair. Also involved in tRNA surveillance by mediating tandem CCA addition to generate a CCACCA at the 3' terminus of unstable tRNAs. While stable tRNAs receive only 3'-terminal CCA, unstable tRNAs are marked with CCACCA and rapidly degraded. This is Multifunctional CCA protein from Burkholderia vietnamiensis (strain G4 / LMG 22486) (Burkholderia cepacia (strain R1808)).